The primary structure comprises 333 residues: Fructose-1,6-bisphosphatase class 1 (333 aa).

Residues glutamate 92, aspartate 113, leucine 115, and aspartate 116 each coordinate Mg(2+). Substrate contacts are provided by residues 116 to 119 (DGSS), asparagine 209, tyrosine 242, and lysine 272. Mg(2+) is bound at residue glutamate 278.

Belongs to the FBPase class 1 family. In terms of assembly, homotetramer. Mg(2+) serves as cofactor.

It is found in the cytoplasm. The enzyme catalyses beta-D-fructose 1,6-bisphosphate + H2O = beta-D-fructose 6-phosphate + phosphate. Its pathway is carbohydrate biosynthesis; Calvin cycle. In Chlorobium phaeobacteroides (strain BS1), this protein is Fructose-1,6-bisphosphatase class 1.